A 313-amino-acid polypeptide reads, in one-letter code: GTP cyclohydrolase MptA (313 aa).

This sequence belongs to the GTP cyclohydrolase IV family. In terms of assembly, homodimer. Fe(2+) is required as a cofactor.

It carries out the reaction GTP + H2O = 7,8-dihydroneopterin 2',3'-cyclic phosphate + formate + diphosphate + H(+). It participates in cofactor biosynthesis; 5,6,7,8-tetrahydromethanopterin biosynthesis. Functionally, converts GTP to 7,8-dihydro-D-neopterin 2',3'-cyclic phosphate, the first intermediate in the biosynthesis of coenzyme methanopterin. The protein is GTP cyclohydrolase MptA of Methanoculleus marisnigri (strain ATCC 35101 / DSM 1498 / JR1).